A 467-amino-acid chain; its full sequence is MAKTRVQFICQNCGAVHSRWAGKCDSCGEWNTLIEEGTNSGIGSGPAAMLSKRKGRAVALTSLSGEIEDAPRIVSGISELDRVTGGGFVRGSALLIGGDPGIGKSTLLTQAAAALSNRGHRIVYVSGEEAVAQIRLRAQRLGVAASAVELAAETNVEDIIATISSDNSGSKRPDLVIIDSIQTLWTDMADSAPGTVTQVRSSAQAMIRYAKQTGAAVVLVGHVTKDGQIAGPRVVEHMVDGVLYFEGEGGHHYRILRTVKNRFGPTDEIGVFEMSDGGLREVSNPSELFLGERNEKSPGAAVFAGMEGTRPVLVEIQALVAPSSLGTPRRAVVGWDGGRLAMILAVLESHCGVRFGQHDVYLNVAGGYRISEPAADIAVAAALVSSMAGIALPPDCVYFGEISLSGAVRAVSHAVQRLKEAEKLGFRQAEVPNGSGELWKDRNFRLMETAALADLVARIAASGAGKK.

The C4-type zinc-finger motif lies at 10 to 27; the sequence is CQNCGAVHSRWAGKCDSC. ATP is bound at residue 98–105; sequence GDPGIGKS. The short motif at 260 to 264 is the RadA KNRFG motif element; it reads KNRFG. Positions 359 to 467 are lon-protease-like; sequence DVYLNVAGGY…RIAASGAGKK (109 aa).

It belongs to the RecA family. RadA subfamily.

DNA-dependent ATPase involved in processing of recombination intermediates, plays a role in repairing DNA breaks. Stimulates the branch migration of RecA-mediated strand transfer reactions, allowing the 3' invading strand to extend heteroduplex DNA faster. Binds ssDNA in the presence of ADP but not other nucleotides, has ATPase activity that is stimulated by ssDNA and various branched DNA structures, but inhibited by SSB. Does not have RecA's homology-searching function. This is DNA repair protein RadA from Brucella abortus (strain 2308).